Reading from the N-terminus, the 519-residue chain is uncharacterized protein (519 aa).

The next 11 membrane-spanning stretches (helical) occupy residues 52–72 (IYFLILLYLIQGVPMGLVRGS), 86–106 (LATYSLAAYPYSLKVLWSPIV), 119–139 (TWVVPCMLLISSTLLLFSYNV), 156–176 (WSFLLVFVCATQDIAVDGWSL), 199–219 (FFLSFTILLVFTSPEFANTFI), 231–251 (LSGYIKFWAYFTFIASVLVCF), 313–333 (MLSLIILINFPLGLALGVYTG), 343–363 (IWLKGYWGRVVSILLNTILVY), 374–394 (VFFPIFLCYTLNASFSTIQFV), 408–430 (IGGTYMTILNTLSNLGGSWPQYV), and 477–497 (TSIVGIFLAISICVSLITPVV).

The protein resides in the membrane. This is an uncharacterized protein from Schizosaccharomyces pombe (strain 972 / ATCC 24843) (Fission yeast).